Here is a 499-residue protein sequence, read N- to C-terminus: MDKLQRDGKEDTSRQRRFLYLLLFQEDLYAIAYDHYFNRSSSFEPMENSSSNDRFSFLTVKRSISRIRQQNGSIIPFVNCDQNRLVGHSRSFYSELVLGGLTAVPEVPFSIRSKHSLEGMNEWTSFRSINSIFPLMEDKIPHSNFLLDIQIPHLTHPEILVRTFRRWIQDAPFLNLLRSVLHEHRNLTISSNLDQLILIASKENKRLSLFLWNYYAYECESLLVPLWKRFSHSRSLPYESFIERTPFYQKIKNIVIFYHKYIKKSLWFLKDPSIHYVKYRERSIIALRGTYLLVKKWRYHLTNFWQCHFHLWLQPYRIYIDEFSNNCFSLLGYLLSVKMKTSVVRIRMLDDSFITHLITKEFDPIAPTTLLIRSLAKERFCDISGHPISRLAWTGLTDDDILDRFDRIWRNIFHYHSGSSKKDGLYRMKYILRLPCAKTLACKHKSTIRVVRERFGSELFTKSFPKERESILLPFSKTRSQRERIWHSDIIQRNPLVNS.

It belongs to the intron maturase 2 family. MatK subfamily.

Its subcellular location is the plastid. It localises to the chloroplast. Usually encoded in the trnK tRNA gene intron. Probably assists in splicing its own and other chloroplast group II introns. The protein is Maturase K of Ceratozamia mexicana (Mexican horncone).